Consider the following 542-residue polypeptide: MVADPPRGDSKGLAAAEPTANGGLALASIEDQGEAAGGCCGSRDRVRRCLRANLLVLLTVVAVVVGVALGLGVSGAGGALALGPERLSAFVFPGELLLRLLRMIILPLVVCSLIGGAASLDPGALGRLGAWALLFFLVTTLLASALGVALALALQPGAASAAINASVGAAGSAENAPKKEVLDSFLDLARNIFPSNLVSAAFRSYSTSYEERNITGTRVKVPVGQEVEGMNILGLVVFAIVFGVALRKLGPEGELLIRFFNSFNEATMVLVSWIMWYAPVGIMFLVAGKIVEMEDVGLLFARLGKYILCCLLGHAIHGLLVLPLIYFLFTRKNPYRFLWGIVTPLATAFGTSSSSATLPLMMKCVEENNGVAKHISRFILPIGATVNMDGAALFQCVAAVFIAQLSEQSLDFVKIITILVTATASSVGAAGIPAGGVLTLAIILEAVNLPVDHISLILAVDWLVDRSCTVLNVEGDALGAGLLQNYVDRTEVRSTEPELIQVKSELPLDPLPAPTEEGNPLLRHYRGPAGDATVASEKESVM.

N-acetylmethionine is present on Met-1. Over 1 to 52 (MVADPPRGDSKGLAAAEPTANGGLALASIEDQGEAAGGCCGSRDRVRRCLRA) the chain is Cytoplasmic. A helical transmembrane segment spans residues 53 to 82 (NLLVLLTVVAVVVGVALGLGVSGAGGALAL). Residues 83–95 (GPERLSAFVFPGE) are Extracellular-facing. Residues 96 to 117 (LLLRLLRMIILPLVVCSLIGGA) traverse the membrane as a helical segment. The Cytoplasmic segment spans residues 118–131 (ASLDPGALGRLGAW). Residues 132–154 (ALLFFLVTTLLASALGVALALAL) traverse the membrane as a helical segment. The Extracellular portion of the chain corresponds to 155–225 (QPGAASAAIN…GTRVKVPVGQ (71 aa)). N-linked (GlcNAc...) asparagine glycans are attached at residues Asn-164 and Asn-213. The helical transmembrane segment at 226–249 (EVEGMNILGLVVFAIVFGVALRKL) threads the bilayer. The Cytoplasmic portion of the chain corresponds to 250-258 (GPEGELLIR). The helical transmembrane segment at 259-286 (FFNSFNEATMVLVSWIMWYAPVGIMFLV) threads the bilayer. Residues 287-307 (AGKIVEMEDVGLLFARLGKYI) lie on the Extracellular side of the membrane. Residues 308-329 (LCCLLGHAIHGLLVLPLIYFLF) form a helical membrane-spanning segment. Topologically, residues 330 to 334 (TRKNP) are cytoplasmic. The discontinuously helical intramembrane region spans 335 to 365 (YRFLWGIVTPLATAFGTSSSSATLPLMMKCV). The Cytoplasmic portion of the chain corresponds to 366 to 374 (EENNGVAKH). The chain crosses the membrane as a helical span at residues 375 to 401 (ISRFILPIGATVNMDGAALFQCVAAVF). Na(+)-binding residues include Gly-383, Thr-385, and Asn-387. The Extracellular portion of the chain corresponds to 402-414 (IAQLSEQSLDFVK). Positions 415 to 448 (IITILVTATASSVGAAGIPAGGVLTLAIILEAVN) form an intramembrane region, discontinuously helical. Residues 449–461 (LPVDHISLILAVD) lie on the Extracellular side of the membrane. The chain crosses the membrane as a helical span at residues 462–483 (WLVDRSCTVLNVEGDALGAGLL). Residues Asn-472 and Asp-476 each contribute to the Na(+) site. The Cytoplasmic segment spans residues 484–542 (QNYVDRTEVRSTEPELIQVKSELPLDPLPAPTEEGNPLLRHYRGPAGDATVASEKESVM). Ser-494 is subject to Phosphoserine. Thr-495 carries the post-translational modification Phosphothreonine. Residues Ser-504, Ser-536, and Ser-540 each carry the phosphoserine modification. Positions 509-542 (DPLPAPTEEGNPLLRHYRGPAGDATVASEKESVM) are disordered.

This sequence belongs to the dicarboxylate/amino acid:cation symporter (DAACS) (TC 2.A.23) family. SLC1A5 subfamily. Homotrimer.

It localises to the cell membrane. Its subcellular location is the melanosome. The enzyme catalyses L-glutamine(out) + L-serine(in) + Na(+)(out) = L-glutamine(in) + L-serine(out) + Na(+)(in). It catalyses the reaction L-glutamine(in) + L-serine(out) + Na(+)(out) = L-glutamine(out) + L-serine(in) + Na(+)(in). The catalysed reaction is L-threonine(in) + L-glutamine(out) + Na(+)(out) = L-threonine(out) + L-glutamine(in) + Na(+)(in). It carries out the reaction L-threonine(out) + L-glutamine(in) + Na(+)(out) = L-threonine(in) + L-glutamine(out) + Na(+)(in). The enzyme catalyses L-asparagine(in) + L-glutamine(out) + Na(+)(out) = L-asparagine(out) + L-glutamine(in) + Na(+)(in). It catalyses the reaction L-asparagine(out) + L-glutamine(in) + Na(+)(out) = L-asparagine(in) + L-glutamine(out) + Na(+)(in). The catalysed reaction is L-glutamine(in) + L-alanine(out) + Na(+)(out) = L-glutamine(out) + L-alanine(in) + Na(+)(in). It carries out the reaction L-valine(out) + L-glutamine(in) + Na(+)(out) = L-valine(in) + L-glutamine(out) + Na(+)(in). The enzyme catalyses L-glutamine(in) + L-methionine(out) + Na(+)(out) = L-glutamine(out) + L-methionine(in) + Na(+)(in). It catalyses the reaction L-glutamine(in) + L-glutamate(out) + Na(+)(out) + H(+)(out) = L-glutamine(out) + L-glutamate(in) + Na(+)(in) + H(+)(in). The catalysed reaction is D-serine(in) + L-glutamine(out) + Na(+)(out) = D-serine(out) + L-glutamine(in) + Na(+)(in). It carries out the reaction D-serine(in) + L-alanine(out) + Na(+)(out) = D-serine(out) + L-alanine(in) + Na(+)(in). The enzyme catalyses nitrate(in) = nitrate(out). It catalyses the reaction iodide(out) = iodide(in). The catalysed reaction is thiocyanate(in) = thiocyanate(out). Functionally, sodium-coupled antiporter of neutral amino acids. In a tri-substrate transport cycle, exchanges neutral amino acids between the extracellular and intracellular compartments, coupled to the inward cotransport of at least one sodium ion. The preferred substrate is the essential amino acid L-glutamine, a precursor for biosynthesis of proteins, nucleotides and amine sugars as well as an alternative fuel for mitochondrial oxidative phosphorylation. Exchanges L-glutamine with other neutral amino acids such as L-serine, L-threonine and L-asparagine in a bidirectional way. Provides L-glutamine to proliferating stem and activated cells driving the metabolic switch toward cell differentiation. The transport cycle is usually pH-independent, with the exception of L-glutamate. Transports extracellular L-glutamate coupled to the cotransport of one proton and one sodium ion in exchange for intracellular L-glutamine counter-ion. May provide for L-glutamate uptake in glial cells regulating glutamine/glutamate cycle in the nervous system. Can transport D-amino acids. Mediates D-serine release from the retinal glia potentially affecting NMDA receptor function in retinal neurons. Displays sodium- and amino acid-dependent but uncoupled channel-like anion conductance with a preference SCN(-) &gt;&gt; NO3(-) &gt; I(-) &gt; Cl(-). Through binding of the fusogenic protein syncytin-1/ERVW-1 may mediate trophoblasts syncytialization, the spontaneous fusion of their plasma membranes, an essential process in placental development. In Macaca fascicularis (Crab-eating macaque), this protein is Neutral amino acid transporter B(0) (SLC1A5).